The sequence spans 116 residues: Large ribosomal subunit protein bL20 (116 aa).

This sequence belongs to the bacterial ribosomal protein bL20 family.

In terms of biological role, binds directly to 23S ribosomal RNA and is necessary for the in vitro assembly process of the 50S ribosomal subunit. It is not involved in the protein synthesizing functions of that subunit. This is Large ribosomal subunit protein bL20 from Acaryochloris marina (strain MBIC 11017).